The chain runs to 556 residues: Undecaprenyl phosphate-alpha-4-amino-4-deoxy-L-arabinose arabinosyl transferase (556 aa).

11 helical membrane-spanning segments follow: residues 5–25 (MIKL…LLPL), 88–108 (FASV…ALLL), 116–136 (LLAA…TYSV), 179–199 (FMTK…PVAL), 207–227 (LLLF…PWAL), 258–278 (APFW…LALL), 296–316 (FLLL…KGKL), 319–339 (YILP…SGLA), 355–375 (LAFG…IIMP), 384–404 (LTIV…AVSL), and 410–430 (WGYL…GSIP).

It belongs to the glycosyltransferase 83 family.

Its subcellular location is the cell inner membrane. The catalysed reaction is 4-amino-4-deoxy-alpha-L-arabinopyranosyl di-trans,octa-cis-undecaprenyl phosphate + lipid IVA = lipid IIA + di-trans,octa-cis-undecaprenyl phosphate.. It participates in lipopolysaccharide metabolism; 4-amino-4-deoxy-beta-L-arabinose-lipid A biosynthesis. In terms of biological role, catalyzes the transfer of the L-Ara4N moiety of the glycolipid undecaprenyl phosphate-alpha-L-Ara4N to lipid A. The modified arabinose is attached to lipid A and is required for resistance to polymyxin and cationic antimicrobial peptides. This is Undecaprenyl phosphate-alpha-4-amino-4-deoxy-L-arabinose arabinosyl transferase from Pectobacterium carotovorum subsp. carotovorum (strain PC1).